A 215-amino-acid chain; its full sequence is MITIALPKGALLEDSISIFKKAGLNFSDALLENSRSLTVESKCKRAKALLVRNGDVPVYVSYGQADLGIVGYDVLQESELKVAKLLDLEFGGCHMSLAVKNNSNYLKPTDLPANCKVASKFTKTARAYFDDLNIPVEIVHLTGSVELGPITGMAEAIVDLVATGKTLKENGLSKIDDLFYSTARLIANPLSLRLDSNPLRDVILSIESSKDILNI.

Belongs to the ATP phosphoribosyltransferase family. Short subfamily. In terms of assembly, heteromultimer composed of HisG and HisZ subunits.

Its subcellular location is the cytoplasm. It carries out the reaction 1-(5-phospho-beta-D-ribosyl)-ATP + diphosphate = 5-phospho-alpha-D-ribose 1-diphosphate + ATP. It participates in amino-acid biosynthesis; L-histidine biosynthesis; L-histidine from 5-phospho-alpha-D-ribose 1-diphosphate: step 1/9. In terms of biological role, catalyzes the condensation of ATP and 5-phosphoribose 1-diphosphate to form N'-(5'-phosphoribosyl)-ATP (PR-ATP). Has a crucial role in the pathway because the rate of histidine biosynthesis seems to be controlled primarily by regulation of HisG enzymatic activity. In Prochlorococcus marinus subsp. pastoris (strain CCMP1986 / NIES-2087 / MED4), this protein is ATP phosphoribosyltransferase.